Consider the following 520-residue polypeptide: Cytochrome P450 72A397 (520 aa).

The helical transmembrane segment at 14-34 (AVAVAVVVVGWAWKVLNWVWV) threads the bilayer. Cysteine 468 serves as a coordination point for heme.

The protein belongs to the cytochrome P450 family. Heme serves as cofactor.

It is found in the membrane. The catalysed reaction is oleanolate + reduced [NADPH--hemoprotein reductase] + O2 = hederagenin + oxidized [NADPH--hemoprotein reductase] + H2O + H(+). In terms of biological role, catalyzes the oxidation of oleanolate at the C-23 position to form hederagenin. The chain is Cytochrome P450 72A397 from Kalopanax septemlobus (Castor aralia).